A 99-amino-acid polypeptide reads, in one-letter code: Large ribosomal subunit protein eL21 (99 aa).

This sequence belongs to the eukaryotic ribosomal protein eL21 family.

This Ignicoccus hospitalis (strain KIN4/I / DSM 18386 / JCM 14125) protein is Large ribosomal subunit protein eL21.